Reading from the N-terminus, the 154-residue chain is Spermatogenesis-associated protein 19, mitochondrial (154 aa).

The N-terminal 24 residues, 1–24 (MIITTWIMYILARKSIGLPFPPRV), are a transit peptide targeting the mitochondrion. Residues serine 26 and serine 116 each carry the phosphoserine modification.

As to expression, expressed in the testis.

Its subcellular location is the mitochondrion outer membrane. It localises to the mitochondrion. The protein resides in the cell projection. The protein localises to the cilium. It is found in the flagellum. Essential for sperm motility and male fertility. Plays an important role in sperm motility by regulating the organization and function of the mitochondria and is also required for correct sperm midpiece assembly. In Rattus norvegicus (Rat), this protein is Spermatogenesis-associated protein 19, mitochondrial (Spata19).